Reading from the N-terminus, the 54-residue chain is UPF0391 membrane protein Mfla_0947/Mfla_1091 (54 aa).

2 consecutive transmembrane segments (helical) span residues 6 to 26 (VIFFVIALIAAFFGFSGIAAG) and 30 to 50 (IAKILFFVFLIITIVSLVAGI).

The protein belongs to the UPF0391 family.

Its subcellular location is the cell membrane. The protein is UPF0391 membrane protein Mfla_0947/Mfla_1091 of Methylobacillus flagellatus (strain ATCC 51484 / DSM 6875 / VKM B-1610 / KT).